The sequence spans 481 residues: Endoplasmic reticulum lectin 1 (481 aa).

A signal peptide spans 1–27 (MRRSDRLRCAGASLLVVLCGVFRSSFG). MRH domains lie at 108 to 245 (SSCS…LCNH) and 340 to 467 (SYCF…ICKI). Intrachain disulfides connect Cys110–Cys123, Cys198–Cys231, Cys214–Cys243, Cys342–Cys355, Cys419–Cys453, and Cys434–Cys465.

Its subcellular location is the endoplasmic reticulum lumen. Functionally, probable lectin that binds selectively to improperly folded lumenal proteins. May function in endoplasmic reticulum quality control and endoplasmic reticulum-associated degradation (ERAD) of both non-glycosylated proteins and glycoproteins. In Xenopus tropicalis (Western clawed frog), this protein is Endoplasmic reticulum lectin 1 (erlec1).